Reading from the N-terminus, the 296-residue chain is Glycine--tRNA ligase alpha subunit (296 aa).

The protein belongs to the class-II aminoacyl-tRNA synthetase family. In terms of assembly, tetramer of two alpha and two beta subunits.

The protein resides in the cytoplasm. The catalysed reaction is tRNA(Gly) + glycine + ATP = glycyl-tRNA(Gly) + AMP + diphosphate. The sequence is that of Glycine--tRNA ligase alpha subunit from Listeria monocytogenes serotype 4a (strain HCC23).